Reading from the N-terminus, the 172-residue chain is uncharacterized protein (172 aa).

The segment covering 1–28 (MAAAGVTAKAGGGTSAAAASLIRARSPA) has biased composition (low complexity). The segment at 1-172 (MAAAGVTAKA…GGRRSGRDAG (172 aa)) is disordered. Basic residues predominate over residues 58 to 68 (PRRRSRARRGH). Over residues 80-100 (TVGGEGQASQIGGGGGGGGGR) the composition is skewed to gly residues. Positions 129–138 (PGLASSPGVA) are enriched in low complexity. The span at 139–165 (PAGGSGGLWSGAGLCSGLGARGFPGGR) shows a compositional bias: gly residues.

This is an uncharacterized protein from Homo sapiens (Human).